The primary structure comprises 160 residues: uncharacterized protein (160 aa).

Residues 5–160 enclose the N-acetyltransferase domain; the sequence is ISLSFYKPEH…GEQLILHHFL (156 aa).

This is an uncharacterized protein from Bacillus subtilis (strain 168).